Reading from the N-terminus, the 650-residue chain is Phosphomethylpyrimidine synthase (650 aa).

Substrate-binding positions include N241, M270, Y299, H335, 355–357, 396–399, and E435; these read SRG and DGLR. A Zn(2+)-binding site is contributed by H439. Y462 is a substrate binding site. H503 contributes to the Zn(2+) binding site. 3 residues coordinate [4Fe-4S] cluster: C583, C586, and C591.

Belongs to the ThiC family. As to quaternary structure, homodimer. [4Fe-4S] cluster serves as cofactor.

The enzyme catalyses 5-amino-1-(5-phospho-beta-D-ribosyl)imidazole + S-adenosyl-L-methionine = 4-amino-2-methyl-5-(phosphooxymethyl)pyrimidine + CO + 5'-deoxyadenosine + formate + L-methionine + 3 H(+). It participates in cofactor biosynthesis; thiamine diphosphate biosynthesis. Catalyzes the synthesis of the hydroxymethylpyrimidine phosphate (HMP-P) moiety of thiamine from aminoimidazole ribotide (AIR) in a radical S-adenosyl-L-methionine (SAM)-dependent reaction. The sequence is that of Phosphomethylpyrimidine synthase from Pseudoalteromonas translucida (strain TAC 125).